Here is a 261-residue protein sequence, read N- to C-terminus: Small ribosomal subunit protein uS3 (261 aa).

The region spanning 39-107 is the KH type-2 domain; it reads VREYLKRKLA…PVHVSIEEIR (69 aa). The tract at residues 213–261 is disordered; it reads QPVAEEPAADDRRPRRTPGRPDGDKPRTRTVKKVDGAADPAKRVRKAGA. The span at 221-254 shows a compositional bias: basic and acidic residues; it reads ADDRRPRRTPGRPDGDKPRTRTVKKVDGAADPAK.

Belongs to the universal ribosomal protein uS3 family. As to quaternary structure, part of the 30S ribosomal subunit. Forms a tight complex with proteins S10 and S14.

Functionally, binds the lower part of the 30S subunit head. Binds mRNA in the 70S ribosome, positioning it for translation. The chain is Small ribosomal subunit protein uS3 from Dechloromonas aromatica (strain RCB).